Consider the following 1241-residue polypeptide: MRSRSNSGVRLDGYARLVHQTILCHQNPVTGLLPASYDQKDAWVRDNVYSILAVWGLGLAYRKNADRDEDKAKAYELEQSVVKLMRGLLHCMIRQVDKVESFKYSQSTKDSLHAKYNTKTCATVVGDDQWGHLQLDATSVYLLFLAQMTASGLHIIHSLDEVNFIQNLVFYIEAAYKTADFGIWERGDKTNQGISELNASSVGMAKAALEALDELDLFGVKGGPQSVIHVLADEVQHCQSILNSLLPRASTSKEVDASLLSVVSFPAFAVEDSHLVELTKQEIITKLQGRYGCCRFLRDGYKTPKEDPNRLYYEPAELKLFENIECEWPLFWTYFILDGIFSGNVEQVQEYREALDAVLIKGKNGVPLLPELYSVPPDRVDEEYQNPHTVDRVPMGKLPHMWGQSLYILGSLMAEGFLAPGEIDPLNRRFSTVPKPDVVVQVSILAETEEIKAILKDKGIDVETIAEVYPIRVQPARILSHIYSSLGCNSRMKLSGRPYRLMGVLGTSKLYDIRKTIFTFTPQFIDQQQFYLALDNQMIVEMLRTDLSYLCSRWRMTGQPTITFPISHTMLDEDGTSLNSSILAALRKMQDGYFGGARIQTGKLSEFLTTSCCTHLSFMDPGPEGKLYSEDYDEDYEDDLDSGNWMDSYDSTSNARCGDEVARYLDRLLAHTVPHPKLAPTSRKGGLDRFRAAVQTTCDLMSLVAKAKELHIQNVHMYLPTKLFQPSRPSLNLLDSPESPQDSQVPSVHVEVHLPRDQSGEVDFQSLVSQLKETSSLQEQADILYMLYSMKGPDWNTELYEEGGATVRELLSELYVKVGEIRHWGLIRYISGILRKKVEALDEACTDLLSYQKHLTVGLPPEPREKTISAPLPYEALTKLIDEASEGDMSISTLTQEIMVYLAMYMRTQPGLFAEMFRLRIGLIIQVMATELAHSLRCSAEEATEGLMNLSPSAMKNLLHHILSGKEFGVERSVRPTDSNVSPAISIHEIGAVGATKTERTGIMQLKSEIKQVEFRRLSVSMESQTSGGHPSGVDLMSPSFLSPAACIAASSGSFPTVCDHQTSKDSRQGQWQRRRRLDGALNRVPIGFYQKVWKILQKCHGLSVEGFVLPSSTTREMTPGEIKFSVHVESVLNRVPQPEYRQLLVEAILVLTMLADIEIHSIGSIIAVEKIVHIANDLFLQEQKTLGADDTMLAKDPASGICTLLYDSAPSGRFGTMTYLSKAAATYVQEFLPHSLCAMQ.

9 positions are modified to phosphoserine: S629, S730, S736, S739, S759, S812, S973, S982, and S986. Residues 811–841 (LSELYVKVGEIRHWGLIRYISGILRKKVEAL) form a calmodulin-binding region. S1008 bears the Phosphoserine; by autocatalysis mark. S1019 is modified (phosphoserine; by PKA). Phosphoserine occurs at positions 1021 and 1024. The tract at residues 1064 to 1104 (SKDSRQGQWQRRRRLDGALNRVPIGFYQKVWKILQKCHGLS) is calmodulin-binding. The residue at position 1131 (S1131) is a Phosphoserine. A lipid anchor (S-farnesyl cysteine) is attached at C1238.

It belongs to the phosphorylase b kinase regulatory chain family. In terms of assembly, hexadecamer of 4 heterotetramers, each composed of alpha, beta, gamma, and delta subunits. Alpha (PHKA1 or PHKA2) and beta (PHKB) are regulatory subunits, gamma (PHKG1 or PHKG2) is the catalytic subunit, and delta is calmodulin. Post-translationally, although the final Cys may be farnesylated, the terminal tripeptide is probably not removed, and the C-terminus is not methylated. In terms of tissue distribution, both isoforms are expressed in muscle.

The protein resides in the cell membrane. It functions in the pathway glycan biosynthesis; glycogen metabolism. With respect to regulation, by phosphorylation of various serine residues and by calcium. Functionally, phosphorylase b kinase catalyzes the phosphorylation of serine in certain substrates, including troponin I. The alpha chain may bind calmodulin. This is Phosphorylase b kinase regulatory subunit alpha, skeletal muscle isoform (Phka1) from Mus musculus (Mouse).